The chain runs to 356 residues: Heat-inducible transcription repressor HrcA (356 aa).

This sequence belongs to the HrcA family.

Negative regulator of class I heat shock genes (grpE-dnaK-dnaJ and groELS operons). Prevents heat-shock induction of these operons. This Bartonella tribocorum (strain CIP 105476 / IBS 506) protein is Heat-inducible transcription repressor HrcA.